A 169-amino-acid polypeptide reads, in one-letter code: MICLVLTIFAHIFPSAWTGINERTFLAIKPDGYQRRLVGEIIRRFEKKGFCLVALKIMQASEKLLRQHYIALQDKPFYDRLVKYMGSGPVVAMVWQGLDVVKTARVMIGETNPAHSLPGTIRGDFCIDVGRNVIHGSDSRESAQREIALWFQPDELVCWQDSAERWIYE.

6 residues coordinate ADP: Lys29, Arg105, Thr111, Arg122, Val129, and Asn132. Catalysis depends on His135, which acts as the Pros-phosphohistidine intermediate.

Belongs to the NDK family. In terms of assembly, homohexamer. Mg(2+) serves as cofactor.

Its subcellular location is the mitochondrion outer membrane. It is found in the cytoplasm. The protein localises to the cytoskeleton. The protein resides in the cilium basal body. The enzyme catalyses a 2'-deoxyribonucleoside 5'-diphosphate + ATP = a 2'-deoxyribonucleoside 5'-triphosphate + ADP. The catalysed reaction is a ribonucleoside 5'-diphosphate + ATP = a ribonucleoside 5'-triphosphate + ADP. Functionally, catalyzes the phosphorylation of ribonucleosides and deoxyribonucleoside diphosphates, other than ATP, into the corresponding triphosphates with ATP as the major phosphate donor. The ATP gamma phosphate is transferred to the nucleoside diphosphate beta phosphate via a ping-pong mechanism, using a phosphorylated active-site intermediate. Through the catalyzed exchange of gamma-phosphate between di- and triphosphonucleosides participates in regulation of intracellular nucleotide homeostasis. Required for ciliary function during renal development. In terms of biological role, independently of its kinase activity, facilitates mitochondrial tethering prior to membrane fusion through its direct membrane-binding and hexamerization. Implicated in repair of both single- and double-stranded breaks in DNA, independently of its kinase activity. The protein is Nucleoside diphosphate kinase 3-A of Xenopus laevis (African clawed frog).